The primary structure comprises 227 residues: Probable methylthioribulose-1-phosphate dehydratase (227 aa).

Substrate is bound at residue cysteine 87. Zn(2+) is bound by residues histidine 105 and histidine 107. The Proton donor/acceptor role is filled by glutamate 129. Residue histidine 185 coordinates Zn(2+).

This sequence belongs to the aldolase class II family. MtnB subfamily. Zn(2+) serves as cofactor.

Its subcellular location is the cytoplasm. It carries out the reaction 5-(methylsulfanyl)-D-ribulose 1-phosphate = 5-methylsulfanyl-2,3-dioxopentyl phosphate + H2O. It participates in amino-acid biosynthesis; L-methionine biosynthesis via salvage pathway; L-methionine from S-methyl-5-thio-alpha-D-ribose 1-phosphate: step 2/6. In terms of biological role, catalyzes the dehydration of methylthioribulose-1-phosphate (MTRu-1-P) into 2,3-diketo-5-methylthiopentyl-1-phosphate (DK-MTP-1-P). This Drosophila melanogaster (Fruit fly) protein is Probable methylthioribulose-1-phosphate dehydratase.